The chain runs to 367 residues: Putative zinc metalloprotease mll0638 (367 aa).

His-20 contacts Zn(2+). Glu-21 is an active-site residue. A Zn(2+)-binding site is contributed by His-24. The next 3 membrane-spanning stretches (helical) occupy residues 108–130 (ATVV…VLFA), 291–313 (LGFE…LNLL), and 343–365 (MAYR…NDLF). Positions 121 to 196 (TIVVFSVLFA…ITFVMLRDGK (76 aa)) constitute a PDZ domain.

The protein belongs to the peptidase M50B family. Zn(2+) is required as a cofactor.

It localises to the cell inner membrane. The sequence is that of Putative zinc metalloprotease mll0638 from Mesorhizobium japonicum (strain LMG 29417 / CECT 9101 / MAFF 303099) (Mesorhizobium loti (strain MAFF 303099)).